Consider the following 298-residue polypeptide: 3'-5' exonuclease crn-4 (298 aa).

The 181-residue stretch at 12–192 folds into the Exonuclease domain; that stretch reads LILDFETTSD…DDCLNIATIL (181 aa). The Mg(2+) site is built by Asp15, Glu17, and Asp184. 4 residues coordinate Zn(2+): Cys210, Cys260, Cys263, and Cys270.

As to quaternary structure, homodimer (via C-terminus). Interacts with crn-5; interaction promotes the DNase activity of crn-4. Interacts with cps-6, crn-1 and cyn-13. Mg(2+) serves as cofactor.

Its activity is regulated as follows. Exonuclease activity is inhibited in vitro by pontacyl violet 6R (PV6R), p-chloromercuriphenyl sulfonate (PCMPS), 5,5'-dithiobis(2-nitrobenzoic acid) (DTNB), aurintricarboxylic acid (ATA), 2-morpholin-4-ylethanesulfonate (MES), 4-[(4,6-dichloro-1,3,5-triazin-2-yl)amino]-2-(3-hydroxy-6-oxoxanthen-9-yl)benzoic acid (DR396) and fmoc-d-Cha-OH (FDCO). Interaction with ssRNA is reduced in vitro by PV6R. Possesses 3'-&gt;5' exoribonuclease activity in digestion of DNA and RNA. Cleaves nucleic acid substrates with efficiencies in the following order: single-stranded RNA (ssRNA) &gt; double-stranded DNA (dsDNA) &gt; single-stranded DNA (ssDNA). Involved in apoptotic DNA degradation. This Caenorhabditis elegans protein is 3'-5' exonuclease crn-4 (crn-4).